Here is a 362-residue protein sequence, read N- to C-terminus: Aminomethyltransferase (362 aa).

The protein belongs to the GcvT family. As to quaternary structure, the glycine cleavage system is composed of four proteins: P, T, L and H.

The catalysed reaction is N(6)-[(R)-S(8)-aminomethyldihydrolipoyl]-L-lysyl-[protein] + (6S)-5,6,7,8-tetrahydrofolate = N(6)-[(R)-dihydrolipoyl]-L-lysyl-[protein] + (6R)-5,10-methylene-5,6,7,8-tetrahydrofolate + NH4(+). The glycine cleavage system catalyzes the degradation of glycine. The chain is Aminomethyltransferase from Porphyromonas gingivalis (strain ATCC 33277 / DSM 20709 / CIP 103683 / JCM 12257 / NCTC 11834 / 2561).